Consider the following 376-residue polypeptide: Queuine tRNA-ribosyltransferase (376 aa).

Catalysis depends on aspartate 92, which acts as the Proton acceptor. Residues 92-96 (DSGGF), aspartate 146, glutamine 190, and glycine 217 contribute to the substrate site. Positions 248-254 (GVGRPED) are RNA binding. The active-site Nucleophile is the aspartate 267. Residues 272–276 (TRNAR) form an RNA binding; important for wobble base 34 recognition region. Residues cysteine 305, cysteine 307, cysteine 310, and histidine 337 each coordinate Zn(2+).

The protein belongs to the queuine tRNA-ribosyltransferase family. In terms of assembly, homodimer. Within each dimer, one monomer is responsible for RNA recognition and catalysis, while the other monomer binds to the replacement base PreQ1. The cofactor is Zn(2+).

It carries out the reaction 7-aminomethyl-7-carbaguanine + guanosine(34) in tRNA = 7-aminomethyl-7-carbaguanosine(34) in tRNA + guanine. It participates in tRNA modification; tRNA-queuosine biosynthesis. In terms of biological role, catalyzes the base-exchange of a guanine (G) residue with the queuine precursor 7-aminomethyl-7-deazaguanine (PreQ1) at position 34 (anticodon wobble position) in tRNAs with GU(N) anticodons (tRNA-Asp, -Asn, -His and -Tyr). Catalysis occurs through a double-displacement mechanism. The nucleophile active site attacks the C1' of nucleotide 34 to detach the guanine base from the RNA, forming a covalent enzyme-RNA intermediate. The proton acceptor active site deprotonates the incoming PreQ1, allowing a nucleophilic attack on the C1' of the ribose to form the product. After dissociation, two additional enzymatic reactions on the tRNA convert PreQ1 to queuine (Q), resulting in the hypermodified nucleoside queuosine (7-(((4,5-cis-dihydroxy-2-cyclopenten-1-yl)amino)methyl)-7-deazaguanosine). The chain is Queuine tRNA-ribosyltransferase from Stenotrophomonas maltophilia (strain K279a).